Reading from the N-terminus, the 271-residue chain is Putative protein FAM220BP (271 aa).

This chain is Putative protein FAM220BP (FAM220BP), found in Homo sapiens (Human).